Here is a 647-residue protein sequence, read N- to C-terminus: Macrolide export ATP-binding/permease protein MacB 2 (647 aa).

In terms of domain architecture, ABC transporter spans 6 to 244 (IQLKGIERRY…VTPTAAPAGK (239 aa)). Position 42–49 (42–49 (GASGSGKS)) interacts with ATP. The interval 223 to 247 (QEDSGRKPAAVPVTPTAAPAGKEGV) is disordered. Low complexity predominate over residues 230-242 (PAAVPVTPTAAPA). Transmembrane regions (helical) follow at residues 273–293 (FLTMLGIIIGIAAVVSVVALG), 527–547 (IAVISLIVGGVGVMNIMLVSV), 581–601 (LGGMLGVGVSLFIGLLFSLFV), and 610–630 (LFSILMAFGCSSLIGILFGYL).

Belongs to the ABC transporter superfamily. Macrolide exporter (TC 3.A.1.122) family. Homodimer. Part of the tripartite efflux system MacAB-TolC, which is composed of an inner membrane transporter, MacB, a periplasmic membrane fusion protein, MacA, and an outer membrane component, TolC. The complex forms a large protein conduit and can translocate molecules across both the inner and outer membranes. Interacts with MacA.

The protein localises to the cell inner membrane. In terms of biological role, part of the tripartite efflux system MacAB-TolC. MacB is a non-canonical ABC transporter that contains transmembrane domains (TMD), which form a pore in the inner membrane, and an ATP-binding domain (NBD), which is responsible for energy generation. Confers resistance against macrolides. The polypeptide is Macrolide export ATP-binding/permease protein MacB 2 (Aeromonas hydrophila subsp. hydrophila (strain ATCC 7966 / DSM 30187 / BCRC 13018 / CCUG 14551 / JCM 1027 / KCTC 2358 / NCIMB 9240 / NCTC 8049)).